Consider the following 286-residue polypeptide: uncharacterized protein (286 aa).

This is an uncharacterized protein from Acidianus sp. F28 (AFV-2).